Reading from the N-terminus, the 245-residue chain is 2,3-bisphosphoglycerate-dependent phosphoglycerate mutase (245 aa).

Residues 8 to 15 (RHGQSLWN), 21 to 22 (TG), arginine 60, 87 to 90 (ERHY), lysine 98, 114 to 115 (RR), and 183 to 184 (GN) each bind substrate. The active-site Tele-phosphohistidine intermediate is the histidine 9. The active-site Proton donor/acceptor is glutamate 87.

Belongs to the phosphoglycerate mutase family. BPG-dependent PGAM subfamily.

The catalysed reaction is (2R)-2-phosphoglycerate = (2R)-3-phosphoglycerate. It participates in carbohydrate degradation; glycolysis; pyruvate from D-glyceraldehyde 3-phosphate: step 3/5. Catalyzes the interconversion of 2-phosphoglycerate and 3-phosphoglycerate. This is 2,3-bisphosphoglycerate-dependent phosphoglycerate mutase from Bacillus cereus (strain AH187).